Consider the following 273-residue polypeptide: Putative phosphoenolpyruvate synthase regulatory protein (273 aa).

153–160 (GVSRSGKT) contributes to the ADP binding site.

The protein belongs to the pyruvate, phosphate/water dikinase regulatory protein family. PSRP subfamily.

The catalysed reaction is [pyruvate, water dikinase] + ADP = [pyruvate, water dikinase]-phosphate + AMP + H(+). The enzyme catalyses [pyruvate, water dikinase]-phosphate + phosphate + H(+) = [pyruvate, water dikinase] + diphosphate. Bifunctional serine/threonine kinase and phosphorylase involved in the regulation of the phosphoenolpyruvate synthase (PEPS) by catalyzing its phosphorylation/dephosphorylation. The chain is Putative phosphoenolpyruvate synthase regulatory protein from Verminephrobacter eiseniae (strain EF01-2).